The primary structure comprises 176 residues: Disulfide bond formation protein B (176 aa).

At 1–14 (MMRSLNRCSKHRAA) the chain is on the cytoplasmic side. Residues 15 to 31 (WLLLALTTFSLELVALY) traverse the membrane as a helical segment. The Periplasmic segment spans residues 32–49 (FQHVMLLKPCVLCVYQRC). Cys41 and Cys44 form a disulfide bridge. A helical membrane pass occupies residues 50–65 (ALYGVVAAGLVGAIAP). The Cytoplasmic portion of the chain corresponds to 66 to 71 (ATPLRF). A helical membrane pass occupies residues 72-89 (SGLAIWLYSAWEGLQLAM). Residues 90-144 (KHTDIQLHPSPFVTCDFFVSFPAWLPLDKWLPSVFSASGDCAVRQWHFLSLEMPQ) lie on the Periplasmic side of the membrane. Cysteines 104 and 130 form a disulfide. The helical transmembrane segment at 145–163 (WMIVIFGAYLAVAVLILLA) threads the bilayer. The Cytoplasmic portion of the chain corresponds to 164-176 (QFFPPRKRDLFSR).

It belongs to the DsbB family.

The protein resides in the cell inner membrane. Its function is as follows. Required for disulfide bond formation in some periplasmic proteins. Acts by oxidizing the DsbA protein. The protein is Disulfide bond formation protein B of Sodalis glossinidius (strain morsitans).